The chain runs to 255 residues: 5'-nucleotidase SurE (255 aa).

The a divalent metal cation site is built by D8, D9, S39, and N91.

The protein belongs to the SurE nucleotidase family. A divalent metal cation is required as a cofactor.

Its subcellular location is the cytoplasm. It catalyses the reaction a ribonucleoside 5'-phosphate + H2O = a ribonucleoside + phosphate. Its function is as follows. Nucleotidase that shows phosphatase activity on nucleoside 5'-monophosphates. In Acinetobacter baylyi (strain ATCC 33305 / BD413 / ADP1), this protein is 5'-nucleotidase SurE.